Here is a 63-residue protein sequence, read N- to C-terminus: Large ribosomal subunit protein uL29 (63 aa).

Belongs to the universal ribosomal protein uL29 family.

This Idiomarina loihiensis (strain ATCC BAA-735 / DSM 15497 / L2-TR) protein is Large ribosomal subunit protein uL29.